The following is a 297-amino-acid chain: D-alanine--D-alanine ligase (297 aa).

The ATP-grasp domain occupies K95–E294. V125–T180 serves as a coordination point for ATP. D248, E261, and N263 together coordinate Mg(2+).

This sequence belongs to the D-alanine--D-alanine ligase family. Mg(2+) is required as a cofactor. It depends on Mn(2+) as a cofactor.

It is found in the cytoplasm. It carries out the reaction 2 D-alanine + ATP = D-alanyl-D-alanine + ADP + phosphate + H(+). It functions in the pathway cell wall biogenesis; peptidoglycan biosynthesis. Its function is as follows. Cell wall formation. In Haemophilus influenzae (strain PittEE), this protein is D-alanine--D-alanine ligase.